A 201-amino-acid polypeptide reads, in one-letter code: UPF0301 protein RER_60040 (201 aa).

This sequence belongs to the UPF0301 (AlgH) family.

The protein is UPF0301 protein RER_60040 of Rhodococcus erythropolis (strain PR4 / NBRC 100887).